A 310-amino-acid chain; its full sequence is HTH-type transcriptional regulator CbbR (310 aa).

Residues 7–64 (ITLKQLRALVAVAGSASLTGGATRLGLTPPAIHSQIRNLEEAFGVPLLHRPPETGSFT) form the HTH lysR-type domain. The H-T-H motif DNA-binding region spans 24-43 (LTGGATRLGLTPPAIHSQIR).

This sequence belongs to the LysR transcriptional regulatory family.

Transcriptional activator for the cbb operon for RuBisCO and other Calvin cycle genes. This is HTH-type transcriptional regulator CbbR (cbbR) from Cereibacter sphaeroides (Rhodobacter sphaeroides).